A 197-amino-acid polypeptide reads, in one-letter code: EF-hand calcium-binding domain-containing protein 9 (197 aa).

The Ca(2+) site is built by Asp-58 and Asp-69. 3 consecutive EF-hand domains span residues 59-94 (LKKA…LLAH), 100-135 (GQFM…FLFN), and 136-171 (IQKQ…YTDK). Asp-149, Asp-153, Arg-155, and Glu-160 together coordinate Ca(2+). The span at 177-188 (KTEEKEKGERKR) shows a compositional bias: basic and acidic residues. Residues 177–197 (KTEEKEKGERKRSLYSKCHIK) form a disordered region.

Component of the CatSper complex or CatSpermasome composed of the core pore-forming members CATSPER1, CATSPER2, CATSPER3 and CATSPER4 as well as auxiliary members CATSPERB, CATSPERG, CATSPERD, CATSPERE, CATSPERZ, C2CD6/CATSPERT, TMEM249, TMEM262 and EFCAB9. HSPA1 may be an additional auxiliary complex member. The core complex members CATSPER1, CATSPER2, CATSPER3 and CATSPER4 form a heterotetrameric channel. The auxiliary CATSPERB, CATSPERG, CATSPERD and CATSPERE subunits form a pavilion-like structure over the pore which stabilizes the complex through interactions with CATSPER4, CATSPER3, CATSPER1 and CATSPER2 respectively. TMEM262/CATSPERH interacts with CATSPERB, further stabilizing the complex. C2CD6/CATSPERT interacts at least with CATSPERD and is required for targeting the CatSper complex in the flagellar membrane. Interacts with CATSPERZ; the interaction is direct, Ca(2+)-dependent and connects EFCAB9 with the CatSper complex. Dissociates from CATSPERZ at elevated pH.

The protein localises to the cytoplasm. It localises to the cell projection. It is found in the cilium. Its subcellular location is the flagellum. Auxiliary component of the CatSper complex, a complex involved in sperm cell hyperactivation. pH-dependent Ca(2+) sensor required to activate the CatSper channel. Sperm cell hyperactivation is needed for sperm motility which is essential late in the preparation of sperm for fertilization. Associates with the CatSper complex via direct interaction with CATSPERZ, and senses intracellular Ca(2+). Together with CATSPERZ, associates with the CatSper channel pore and is required for the two-row structure of each single CatSper channel. The sequence is that of EF-hand calcium-binding domain-containing protein 9 from Homo sapiens (Human).